Here is a 314-residue protein sequence, read N- to C-terminus: Coiled-coil domain-containing protein 92 (314 aa).

2 coiled-coil regions span residues 1–27 (MAAT…HAST) and 59–113 (DSSS…EKKY). 2 disordered regions span residues 153-193 (LSSS…KKSL) and 251-314 (ASDR…DRTV). The span at 176 to 186 (PPKDKLPETPR) shows a compositional bias: basic and acidic residues. Residue S192 is modified to Phosphoserine. Residues 266–280 (KPHKTHVGVAHRIHH) are compositionally biased toward basic residues.

Interacts with CEP164. In terms of processing, phosphorylated at Ser-192 by TTBK2.

It is found in the cytoplasm. The protein resides in the cytoskeleton. The protein localises to the microtubule organizing center. It localises to the centrosome. Its subcellular location is the centriole. In terms of biological role, interferon-stimulated protein that plays a role in innate immunity. The sequence is that of Coiled-coil domain-containing protein 92 (Ccdc92) from Mus musculus (Mouse).